The chain runs to 225 residues: Uracil-DNA glycosylase (225 aa).

Asp65 functions as the Proton acceptor in the catalytic mechanism.

It belongs to the uracil-DNA glycosylase (UDG) superfamily. UNG family.

It localises to the cytoplasm. It catalyses the reaction Hydrolyzes single-stranded DNA or mismatched double-stranded DNA and polynucleotides, releasing free uracil.. Its function is as follows. Excises uracil residues from the DNA which can arise as a result of misincorporation of dUMP residues by DNA polymerase or due to deamination of cytosine. This is Uracil-DNA glycosylase from Lysinibacillus sphaericus (strain C3-41).